The primary structure comprises 196 residues: MHRENYFSKIAFCLLGVLFLSCITSVQTVSGDAASHEERMNNYRKRVGRLFMEQKAAQPDAVKLPSGLVFQRIARGSGKRAPAIDDKCEVHYTGRLRDGTVFDSSRERGKPTTFRPNEVIKGWTEALQLMREGDRWRLFIPYDLAYGVTGGGGMIPPYSPLEFDVELISIKDGGKGRTAEEVDEILRKAEEDREDM.

The signal sequence occupies residues 1-29 (MHRENYFSKIAFCLLGVLFLSCITSVQTV). Positions 85 to 171 (DDKCEVHYTG…EFDVELISIK (87 aa)) constitute a PPIase FKBP-type domain.

This sequence belongs to the FKBP-type PPIase family.

It localises to the secreted. It is found in the extracellular space. The catalysed reaction is [protein]-peptidylproline (omega=180) = [protein]-peptidylproline (omega=0). Its activity is regulated as follows. Strongly inhibited by FK506 and L-685,818. Its function is as follows. Essential virulence factor associated with macrophage infectivity. Exhibits PPIase activity. The sequence is that of Macrophage infectivity potentiator (MIP) from Trypanosoma cruzi.